Consider the following 559-residue polypeptide: Heterochromatin protein 1-binding protein 3 (559 aa).

Positions 1-132 (MATDLSEAEP…SKEKEKKVKK (132 aa)) are disordered. 2 stretches are compositionally biased toward basic and acidic residues: residues 51–68 (TPPK…KADA) and 96–128 (EQPK…EKEK). 3 consecutive H15 domains span residues 158–233 (SRPK…VVVS), 256–331 (QQVK…QLKK), and 339–414 (GGTL…QLCF). Positions 256-260 (QQVKL) match the PxVxL motif motif. The disordered stretch occupies residues 421 to 559 (DVLYPEKQQD…AMRKSLRAKK (139 aa)). The segment covering 429 to 459 (QDEDSEESQEEEEEESEEEEESEEEESEEEE) has biased composition (acidic residues). Basic residues predominate over residues 463-515 (KKRMQKRPPPKSRSRAPPMKRRESKPKPRKTPAAHQGKAKPPPKVKTPVKKAK). Positions 516 to 533 (PAAPAIKKPSGGSSSKKP) are enriched in low complexity. Positions 549–559 (SAMRKSLRAKK) are enriched in basic residues.

The protein localises to the nucleus. Its subcellular location is the chromosome. Its function is as follows. Component of heterochromatin that maintains heterochromatin integrity during G1/S progression and regulates the duration of G1 phase to critically influence cell proliferative capacity. The polypeptide is Heterochromatin protein 1-binding protein 3 (HP1BP3) (Gallus gallus (Chicken)).